The following is a 53-amino-acid chain: ATP synthase protein 8 (53 aa).

A helical membrane pass occupies residues Ile10–Leu30.

It belongs to the ATPase protein 8 family. As to quaternary structure, F-type ATPases have 2 components, CF(1) - the catalytic core - and CF(0) - the membrane proton channel.

It localises to the mitochondrion membrane. Functionally, mitochondrial membrane ATP synthase (F(1)F(0) ATP synthase or Complex V) produces ATP from ADP in the presence of a proton gradient across the membrane which is generated by electron transport complexes of the respiratory chain. F-type ATPases consist of two structural domains, F(1) - containing the extramembraneous catalytic core and F(0) - containing the membrane proton channel, linked together by a central stalk and a peripheral stalk. During catalysis, ATP synthesis in the catalytic domain of F(1) is coupled via a rotary mechanism of the central stalk subunits to proton translocation. Part of the complex F(0) domain. Minor subunit located with subunit a in the membrane. This Artemia franciscana (Brine shrimp) protein is ATP synthase protein 8 (MT-ATP8).